Here is a 379-residue protein sequence, read N- to C-terminus: Homoserine O-acetyltransferase (379 aa).

Positions 45 to 355 (NAILILHALT…PHGHDAFLIE (311 aa)) constitute an AB hydrolase-1 domain. Serine 151 (nucleophile) is an active-site residue. Arginine 220 is a substrate binding site. Active-site residues include aspartate 316 and histidine 349. Aspartate 350 serves as a coordination point for substrate.

The protein belongs to the AB hydrolase superfamily. MetX family. As to quaternary structure, homodimer.

The protein resides in the cytoplasm. The enzyme catalyses L-homoserine + acetyl-CoA = O-acetyl-L-homoserine + CoA. The protein operates within amino-acid biosynthesis; L-methionine biosynthesis via de novo pathway; O-acetyl-L-homoserine from L-homoserine: step 1/1. Transfers an acetyl group from acetyl-CoA to L-homoserine, forming acetyl-L-homoserine. This is Homoserine O-acetyltransferase from Carboxydothermus hydrogenoformans (strain ATCC BAA-161 / DSM 6008 / Z-2901).